Here is a 139-residue protein sequence, read N- to C-terminus: uncharacterized protein (139 aa).

A run of 2 helical transmembrane segments spans residues 35–55 (LVFL…SFLI) and 57–77 (FGIL…LTVI).

It localises to the membrane. This is an uncharacterized protein from Saccharomyces cerevisiae (strain ATCC 204508 / S288c) (Baker's yeast).